The following is a 493-amino-acid chain: Amidophosphoribosyltransferase (493 aa).

The propeptide occupies Met-1 to Ala-26. The Nucleophile role is filled by Cys-27. The Glutamine amidotransferase type-2 domain maps to Cys-27 to Ala-252. A [4Fe-4S] cluster-binding site is contributed by Cys-268. 3 residues coordinate Mg(2+): Ser-315, Asp-377, and Asp-378. Cys-414, Cys-465, and Cys-468 together coordinate [4Fe-4S] cluster.

In the C-terminal section; belongs to the purine/pyrimidine phosphoribosyltransferase family. Mg(2+) is required as a cofactor. Requires [4Fe-4S] cluster as cofactor.

The catalysed reaction is 5-phospho-beta-D-ribosylamine + L-glutamate + diphosphate = 5-phospho-alpha-D-ribose 1-diphosphate + L-glutamine + H2O. It participates in purine metabolism; IMP biosynthesis via de novo pathway; N(1)-(5-phospho-D-ribosyl)glycinamide from 5-phospho-alpha-D-ribose 1-diphosphate: step 1/2. Its function is as follows. Catalyzes the formation of phosphoribosylamine from phosphoribosylpyrophosphate (PRPP) and glutamine. In Synechococcus elongatus (strain ATCC 33912 / PCC 7942 / FACHB-805) (Anacystis nidulans R2), this protein is Amidophosphoribosyltransferase.